Consider the following 413-residue polypeptide: Succinate--CoA ligase [ADP-forming] subunit beta, mitochondrial (413 aa).

The N-terminal 2 residues, 1 to 2 (RR), are a transit peptide targeting the mitochondrion. In terms of domain architecture, ATP-grasp spans 11–238 (MGLLQEAGIS…SNSAYRQKKI (228 aa)). ATP contacts are provided by residues K48 and 55–57 (GRG). Positions 208 and 222 each coordinate Mg(2+). Substrate-binding positions include N273 and 330-332 (GIM).

The protein belongs to the succinate/malate CoA ligase beta subunit family. ATP-specific subunit beta subfamily. Heterodimer of an alpha and a beta subunit. The beta subunit determines specificity for ATP. The cofactor is Mg(2+). As to expression, widely expressed. Not present in liver.

It localises to the mitochondrion. It carries out the reaction succinate + ATP + CoA = succinyl-CoA + ADP + phosphate. It participates in carbohydrate metabolism; tricarboxylic acid cycle; succinate from succinyl-CoA (ligase route): step 1/1. Its function is as follows. ATP-specific succinyl-CoA synthetase functions in the citric acid cycle (TCA), coupling the hydrolysis of succinyl-CoA to the synthesis of ATP and thus represents the only step of substrate-level phosphorylation in the TCA. The beta subunit provides nucleotide specificity of the enzyme and binds the substrate succinate, while the binding sites for coenzyme A and phosphate are found in the alpha subunit. This chain is Succinate--CoA ligase [ADP-forming] subunit beta, mitochondrial, found in Columba livia (Rock dove).